The chain runs to 1225 residues: Chromosome-associated kinesin KIF4 (1225 aa).

Residues Ile-9 to Ile-338 form the Kinesin motor domain. Gly-88 to Thr-95 lines the ATP pocket. A coiled-coil region spans residues Glu-352–Val-1003. 3 disordered regions span residues Gln-498–Gln-520, Asn-717–Gly-744, and Gly-1006–Glu-1047. The span at Gly-507–Gln-520 shows a compositional bias: polar residues. Residues Arg-719–Gln-738 show a composition bias toward basic and acidic residues. The segment at Ala-1004–Asp-1225 is globular.

The protein belongs to the TRAFAC class myosin-kinesin ATPase superfamily. Kinesin family. Chromokinesin subfamily. It depends on [2Fe-2S] cluster as a cofactor. Requires [4Fe-4S] cluster as cofactor. In terms of tissue distribution, expressed in proliferating cells; neuroepithelium of embryos.

The protein localises to the nucleus. It is found in the chromosome. It localises to the cytoplasm. The protein resides in the cytoskeleton. Its function is as follows. Iron-sulfur (Fe-S) cluster binding motor protein that has a role in chromosome segregation during mitosis. Required for mitotic chromosomal positioning and bipolar spindle stabilization. In Gallus gallus (Chicken), this protein is Chromosome-associated kinesin KIF4 (KIF4).